The following is a 601-amino-acid chain: Sestrin homolog (601 aa).

Residues 1–11 (MISMGMTSKGQ) are compositionally biased toward polar residues. Residues 1–58 (MISMGMTSKGQNVDGAPAGNSSSEWIISSSSSPFQANKRYSLDPPFGSDYSPPASPQN) are disordered. N-linked (GlcNAc...) asparagine glycosylation is present at asparagine 20. The span at 21–32 (SSSEWIISSSSS) shows a compositional bias: low complexity. N-linked (GlcNAc...) asparagine glycosylation is found at asparagine 322 and asparagine 330. Residues 355–425 (RRSQQQDDDD…DSSSSTLSQS (71 aa)) are disordered. A compositionally biased stretch (basic and acidic residues) spans 368–379 (LHDRQQDFHNAG). Residues 380–425 (DDSQSSNNNTTTTTTTTTTTTTTTNTNTTSNSAGGGDSSSSTLSQS) show a composition bias toward low complexity. N-linked (GlcNAc...) asparagine glycosylation is found at asparagine 387, asparagine 388, asparagine 406, asparagine 438, and asparagine 499.

This sequence belongs to the sestrin family.

The protein resides in the nucleus. The protein localises to the cytoplasm. In terms of biological role, may function as a negative feedback regulator of TOR function. The chain is Sestrin homolog from Dictyostelium discoideum (Social amoeba).